Here is a 228-residue protein sequence, read N- to C-terminus: LexA repressor (228 aa).

The segment at residues 28–48 (IREIGEALDIRSTNGVNDHLK) is a DNA-binding region (H-T-H motif). Active-site for autocatalytic cleavage activity residues include serine 146 and lysine 183.

It belongs to the peptidase S24 family. In terms of assembly, homodimer.

It carries out the reaction Hydrolysis of Ala-|-Gly bond in repressor LexA.. In terms of biological role, represses a number of genes involved in the response to DNA damage (SOS response), including recA and lexA. In the presence of single-stranded DNA, RecA interacts with LexA causing an autocatalytic cleavage which disrupts the DNA-binding part of LexA, leading to derepression of the SOS regulon and eventually DNA repair. The polypeptide is LexA repressor (Anaeromyxobacter dehalogenans (strain 2CP-1 / ATCC BAA-258)).